A 141-amino-acid polypeptide reads, in one-letter code: HTH-type transcriptional regulator LrpA (141 aa).

The HTH asnC-type domain maps to 2–63 (IDERDKIILE…RINPKKLGYS (62 aa)). The H-T-H motif DNA-binding region spans 21 to 40 (FTEIAKKLGISETAVRKRVK).

Homooctamer; tetramer of dimers.

In terms of biological role, DNA-binding protein that negatively regulates its own transcription. Interferes with RNA polymerase (RNAP) recruitment by inhibiting the association of RNAP with the TBP-TFB promoter complex. The sequence is that of HTH-type transcriptional regulator LrpA (lrpA) from Pyrococcus horikoshii (strain ATCC 700860 / DSM 12428 / JCM 9974 / NBRC 100139 / OT-3).